Here is a 200-residue protein sequence, read N- to C-terminus: 2-phospho-L-lactate guanylyltransferase (200 aa).

This sequence belongs to the CofC family. As to quaternary structure, homodimer.

The catalysed reaction is (2S)-2-phospholactate + GTP + H(+) = (2S)-lactyl-2-diphospho-5'-guanosine + diphosphate. Its pathway is cofactor biosynthesis; coenzyme F420 biosynthesis. Functionally, guanylyltransferase that catalyzes the activation of (2S)-2-phospholactate (2-PL) as (2S)-lactyl-2-diphospho-5'-guanosine, via the condensation of 2-PL with GTP. It is involved in the biosynthesis of coenzyme F420, a hydride carrier cofactor. This is 2-phospho-L-lactate guanylyltransferase from Ferroglobus placidus (strain DSM 10642 / AEDII12DO).